We begin with the raw amino-acid sequence, 1133 residues long: Lon protease homolog, mitochondrial (1133 aa).

The transit peptide at 1 to 37 (MLRTRTTKTLSTVARTTRAIQYYRSIAKTAAVSQRRF) directs the protein to the mitochondrion. Residues 38-98 (ASTLTVRDVE…ATNSGKSILA (61 aa)) constitute a propeptide, removed in mature form; by autocatalysis. Composition is skewed to basic and acidic residues over residues 98 to 117 (AKDD…VPDE) and 125 to 143 (EPTR…EASK). 2 disordered regions span residues 98-176 (AKDD…KDVP) and 282-358 (ELFP…LDDI). A compositionally biased stretch (low complexity) spans 145–166 (SRSSASGGGQSSSSRSDSGDGS). The region spanning 182–480 (MLALPIARRP…KSLLVLKKEL (299 aa)) is the Lon N-terminal domain. Composition is skewed to basic and acidic residues over residues 282–301 (ELFP…KDTD) and 325–340 (KLED…SELQ). The span at 348–358 (TEEESEELDDI) shows a compositional bias: acidic residues. 632-639 (GPPGVGKT) is an ATP binding site. The interval 839–892 (KKLSIEDSPTSSADSKPKESVSSEEKAENNAKSSSEKTKDNNSEKTSDDIEALK) is dispensable for catalytic activity. Residues 844-889 (EDSPTSSADSKPKESVSSEEKAENNAKSSSEKTKDNNSEKTSDDIE) form a disordered region. A compositionally biased stretch (basic and acidic residues) spans 853–889 (SKPKESVSSEEKAENNAKSSSEKTKDNNSEKTSDDIE). The Lon proteolytic domain maps to 923–1109 (TTPPGVVMGL…NDIFQKLFKD (187 aa)). Active-site residues include serine 1015 and lysine 1058.

Belongs to the peptidase S16 family. In terms of assembly, homohexamer. Organized in a ring with a central cavity. The ATP-binding and proteolytic domains (AP-domain) form a hexameric chamber. Oligomerization is independent of its proteolytic activity and the autocatalytic maturation of its subunits.

The protein resides in the mitochondrion matrix. The enzyme catalyses Hydrolysis of proteins in presence of ATP.. Functionally, ATP-dependent serine protease that mediates the selective degradation of misfolded, unassembled or oxidatively damaged polypeptides as well as certain short-lived regulatory proteins in the mitochondrial matrix. May also have a chaperone function in the assembly of inner membrane protein complexes. Participates in the regulation of mitochondrial gene expression and in the maintenance of the integrity of the mitochondrial genome. Binds to mitochondrial DNA in a site-specific manner. Endogenous substrates include ABF2, ACO2, ILV1, ILV2, LSC1, LYS4, MGM101 and several oxidized proteins. The 2 nucleic acid-binding proteins ABF2 and MGM101 are protected from degradation by PIM1 when they are bound to DNA. The polypeptide is Lon protease homolog, mitochondrial (Saccharomyces cerevisiae (strain ATCC 204508 / S288c) (Baker's yeast)).